A 359-amino-acid chain; its full sequence is Fructose-bisphosphate aldolase (359 aa).

Residue Ser-50 participates in D-glyceraldehyde 3-phosphate binding. The Proton donor role is filled by Asp-83. His-84, Asp-105, Glu-142, and His-198 together coordinate Zn(2+). Gly-199 is a dihydroxyacetone phosphate binding site. His-232 contributes to the Zn(2+) binding site. Residues 233–235 (GSS) and 275–278 (NIDT) each bind dihydroxyacetone phosphate.

Belongs to the class II fructose-bisphosphate aldolase family. Zn(2+) is required as a cofactor.

It catalyses the reaction beta-D-fructose 1,6-bisphosphate = D-glyceraldehyde 3-phosphate + dihydroxyacetone phosphate. The protein operates within carbohydrate degradation; glycolysis; D-glyceraldehyde 3-phosphate and glycerone phosphate from D-glucose: step 4/4. In terms of biological role, catalyzes the aldol condensation of dihydroxyacetone phosphate (DHAP or glycerone-phosphate) with glyceraldehyde 3-phosphate (G3P) to form fructose 1,6-bisphosphate (FBP) in gluconeogenesis and the reverse reaction in glycolysis. The chain is Fructose-bisphosphate aldolase (fba) from Nostoc commune.